A 222-amino-acid polypeptide reads, in one-letter code: Chymotrypsin-1 (222 aa).

The Peptidase S1 domain maps to 1–221 (IVGGKDAPVG…FVSWINANLK (221 aa)). Cys-26 and Cys-42 form a disulfide bridge. Active-site charge relay system residues include His-41 and Asp-87. Cystine bridges form between Cys-151/Cys-164 and Cys-174/Cys-198. The active-site Charge relay system is Ser-178.

This sequence belongs to the peptidase S1 family.

It localises to the secreted. It is found in the extracellular space. It catalyses the reaction Preferential cleavage: Tyr-|-Xaa, Trp-|-Xaa, Phe-|-Xaa, Leu-|-Xaa.. This is Chymotrypsin-1 from Solenopsis invicta (Red imported fire ant).